The primary structure comprises 406 residues: Betaine--homocysteine S-methyltransferase 1 (406 aa).

Positions 11-314 (KGILERLNAG…YHIRAIAEEL (304 aa)) constitute a Hcy-binding domain. Residues Lys40, Lys93, and Lys98 each carry the N6-succinyllysine modification. Cys217 is a binding site for Zn(2+). N6-succinyllysine is present on residues Lys232 and Lys241. Residues Cys299 and Cys300 each coordinate Zn(2+). Ser330 bears the Phosphoserine mark. N6-succinyllysine is present on residues Lys340 and Lys377.

Homotetramer. It depends on Zn(2+) as a cofactor.

It is found in the cytoplasm. Its subcellular location is the cytosol. It localises to the nucleus. The catalysed reaction is L-homocysteine + glycine betaine = N,N-dimethylglycine + L-methionine. It participates in amine and polyamine degradation; betaine degradation; sarcosine from betaine: step 1/2. It functions in the pathway amino-acid biosynthesis; L-methionine biosynthesis via de novo pathway; L-methionine from L-homocysteine (BhmT route): step 1/1. Its function is as follows. Involved in the regulation of homocysteine metabolism. Converts betaine and homocysteine to dimethylglycine and methionine, respectively. This reaction is also required for the irreversible oxidation of choline. This Pongo abelii (Sumatran orangutan) protein is Betaine--homocysteine S-methyltransferase 1 (BHMT).